The following is a 489-amino-acid chain: MNLNKTLRKNSPSGYKALLTFSIICGLMATGCAHQESLPNSTANSVDRQVGYFADNGVGNPLAIVQHPAGIHKNGITYVSYQGPKEDPYIASYNHQTGQWQGPFRAGISELGRRDGGKKFDNHGKPTMLIDDEGYIHIFYGGHGGQASNGKNPLGNTHHGANKHAVSKRPYDISQWEDLNNITPFGTYNQAIKMDNGDIYLFFRHGAHRSDWVYQKSVDNGRTFASPVSFLKHKRRTDIDAVDSWYAWAGKGQGDNIIVSYDYHVCWDGGAGVNGRGHTTERHDVYFMSFNTKTGEWSNVEGEKLVLPVTREVADEKTMAMRTGELWTFNGSTHLDAQGQPHIAINAGIDKGAKTGGPKQTRHVRWNGNEWVGGDKVIPQYERVSRGDFMVTDPENIRYLTTYNQDNDAVLSWWQSHDGGEHFVEDKTVLRKDNASFAISAFIKDAIPDAQMLVAEKVSDEGIKMYLVGEEGAVTRSLVDLKTAMPTSK.

The N-terminal stretch at 1-31 (MNLNKTLRKNSPSGYKALLTFSIICGLMATG) is a signal peptide. A lipid anchor (N-palmitoyl cysteine) is attached at cysteine 32. Cysteine 32 carries S-diacylglycerol cysteine lipidation. 2 residues coordinate substrate: asparagine 60 and asparagine 122. Histidine 123 functions as the Proton donor in the catalytic mechanism. Substrate is bound by residues lysine 125 and histidine 143. Residue tyrosine 188 is the Proton acceptor of the active site. Positions 204, 208, and 246 each coordinate substrate. Histidine 208 provides a ligand contact to Zn(2+). Zn(2+)-binding residues include histidine 264, cysteine 266, and histidine 278. Histidine 278 is a substrate binding site.

It belongs to the polysaccharide lyase 25 family.

It is found in the cell membrane. Ulvan lyase involved in ulvan degradation. Ulvan is the main polysaccharide component of the Ulvales (green seaweed) cell wall. It is composed of disaccharide building blocks comprising 3-sulfated rhamnose (Rha3S) linked to D-glucuronic acid (GlcA), L-iduronic acid (IduA), or D-xylose (Xyl). Ulvan lyase catalyzes the endolytic cleavage of the glycosidic bond between Rha3S and the uronic acids GlcA or IduA, producing oligosaccharides that have unsaturated 4-deoxy-L-threo-hex-4-enopyranosiduronic acid (deltaUA) at the non-reducing end. This results eventually in the degradation of the ulvan polysaccharide into deltaUA-Rha3S disaccharides and deltaUA-Rha3S-Xyl-Rha3S tetrasaccharides. This is Ulvan Lyase-PL25 from Pseudoalteromonas sp. (strain PLSV).